A 602-amino-acid polypeptide reads, in one-letter code: Translation initiation factor IF-2 (602 aa).

The tr-type G domain maps to 112–281 (KRAPIITIMG…LLLCEVLDLK (170 aa)). Residues 121 to 128 (GHVDHGKT) are G1. GTP is bound at residue 121 to 128 (GHVDHGKT). The interval 146 to 150 (GITQH) is G2. The segment at 167-170 (DTPG) is G3. GTP-binding positions include 167–171 (DTPGH) and 221–224 (NKMD). The interval 221–224 (NKMD) is G4. The segment at 257 to 259 (SAL) is G5.

The protein belongs to the TRAFAC class translation factor GTPase superfamily. Classic translation factor GTPase family. IF-2 subfamily.

The protein resides in the cytoplasm. In terms of biological role, one of the essential components for the initiation of protein synthesis. Protects formylmethionyl-tRNA from spontaneous hydrolysis and promotes its binding to the 30S ribosomal subunits. Also involved in the hydrolysis of GTP during the formation of the 70S ribosomal complex. The chain is Translation initiation factor IF-2 from Mycoplasmopsis synoviae (strain 53) (Mycoplasma synoviae).